A 127-amino-acid polypeptide reads, in one-letter code: Mediator of RNA polymerase II transcription subunit 9 (127 aa).

Residues 95-119 (QKEQEIEAKKRVHRQLRQRVEEIAG) are a coiled coil.

The protein belongs to the Mediator complex subunit 9 family. Component of the Mediator complex.

It localises to the nucleus. Functionally, component of the Mediator complex, a coactivator involved in the regulated transcription of nearly all RNA polymerase II-dependent genes. Mediator functions as a bridge to convey information from gene-specific regulatory proteins to the basal RNA polymerase II transcription machinery. Mediator is recruited to promoters by direct interactions with regulatory proteins and serves as a scaffold for the assembly of a functional preinitiation complex with RNA polymerase II and the general transcription factors. This Eremothecium gossypii (strain ATCC 10895 / CBS 109.51 / FGSC 9923 / NRRL Y-1056) (Yeast) protein is Mediator of RNA polymerase II transcription subunit 9 (CSE2).